A 213-amino-acid polypeptide reads, in one-letter code: Ribonuclease T (213 aa).

Positions V28 to F202 constitute an Exonuclease domain. Positions 31, 33, 189, and 194 each coordinate Mg(2+). H189 acts as the Proton donor/acceptor in catalysis.

The protein belongs to the RNase T family. In terms of assembly, homodimer. Requires Mg(2+) as cofactor.

Trims short 3' overhangs of a variety of RNA species, leaving a one or two nucleotide 3' overhang. Responsible for the end-turnover of tRNA: specifically removes the terminal AMP residue from uncharged tRNA (tRNA-C-C-A). Also appears to be involved in tRNA biosynthesis. The polypeptide is Ribonuclease T (Xanthomonas axonopodis pv. citri (strain 306)).